The following is a 388-amino-acid chain: Processive diacylglycerol beta-glucosyltransferase (388 aa).

This sequence belongs to the glycosyltransferase 28 family. UgtP subfamily.

The protein localises to the cell membrane. It carries out the reaction a 1,2-diacyl-3-O-(beta-D-glucopyranosyl)-sn-glycerol + UDP-alpha-D-glucose = a 1,2-diacyl-3-O-(beta-D-Glc-(1-&gt;6)-beta-D-Glc)-sn-glycerol + UDP + H(+). The catalysed reaction is a 1,2-diacyl-3-O-(beta-D-Glc-(1-&gt;6)-beta-D-Glc)-sn-glycerol + UDP-alpha-D-glucose = a 1,2-diacyl-3-O-(beta-D-Glc-(1-&gt;6)-beta-D-Glc-(1-&gt;6)-beta-D-Glc)-sn-glycerol + UDP + H(+). It catalyses the reaction a 1,2-diacyl-sn-glycerol + UDP-alpha-D-glucose = a 1,2-diacyl-3-O-(beta-D-glucopyranosyl)-sn-glycerol + UDP + H(+). It participates in glycolipid metabolism; diglucosyl-diacylglycerol biosynthesis. Processive glucosyltransferase involved in the biosynthesis of both the bilayer- and non-bilayer-forming membrane glucolipids. Is able to successively transfer up to three glucosyl residues to diacylglycerol (DAG), thereby catalyzing the formation of beta-monoglucosyl-DAG (3-O-(beta-D-glucopyranosyl)-1,2-diacyl-sn-glycerol), beta-diglucosyl-DAG (3-O-(beta-D-glucopyranosyl-beta-(1-&gt;6)-D-glucopyranosyl)-1,2-diacyl-sn-glycerol) and beta-triglucosyl-DAG (3-O-(beta-D-glucopyranosyl-beta-(1-&gt;6)-D-glucopyranosyl-beta-(1-&gt;6)-D-glucopyranosyl)-1,2-diacyl-sn-glycerol). Beta-diglucosyl-DAG is the predominant glycolipid found in Bacillales and is also used as a membrane anchor for lipoteichoic acid (LTA). This is Processive diacylglycerol beta-glucosyltransferase from Bacillus cereus (strain G9842).